Consider the following 346-residue polypeptide: uncharacterized protein (346 aa).

This is an uncharacterized protein from Schizosaccharomyces pombe (strain 972 / ATCC 24843) (Fission yeast).